Here is a 2169-residue protein sequence, read N- to C-terminus: Voltage-dependent L-type calcium channel subunit alpha-1C (2169 aa).

Residues 1–154 lie on the Cytoplasmic side of the membrane; sequence MIRAFAQPST…RACISIVEWK (154 aa). Positions 77–98 are calmodulin-binding; sequence GAALSWLAAIDAARQAKLMGSA. The disordered stretch occupies residues 104–128; sequence STVSSTQRKRQQYGKPKKQGGTTAT. Residues 110-121 are compositionally biased toward basic residues; it reads QRKRQQYGKPKK. The stretch at 141 to 438 is one I repeat; the sequence is NPIRRACISI…LVLGVLSGEF (298 aa). Residues 155–173 traverse the membrane as a helical segment; sequence PFEIIILLTIFANCVALAI. Residues 174-188 are Extracellular-facing; it reads YIPFPEDDSNATNSN. Asn183 is a glycosylation site (N-linked (GlcNAc...) asparagine). A helical transmembrane segment spans residues 189 to 209; that stretch reads LERVEYLFLIIFTVEAFLKVI. At 210–218 the chain is on the cytoplasmic side; the sequence is AYGLLFHPN. Residues 219–239 traverse the membrane as a helical segment; sequence AYLRNGWNLLDFIIVVVGLFS. Over 240 to 262 the chain is Extracellular; sequence AILEQATKADGANALGGKGAGFD. The chain crosses the membrane as a helical span at residues 263-281; the sequence is VKALRAFRVLRPLRLVSGV. Topologically, residues 282–298 are cytoplasmic; sequence PSLQVVLNSIIKAMVPL. The chain crosses the membrane as a helical span at residues 299-320; it reads LHIALLVLFVIIIYAIIGLELF. Over 321 to 380 the chain is Extracellular; that stretch reads MGKMHKTCYNQEGIIDVPAEEDPSPCALETGHGRQCQNGTVCKPGWDGPKHGITNFDNFA. Cystine bridges form between Cys328-Cys356 and Cys346-Cys362. Asn358 carries N-linked (GlcNAc...) asparagine glycosylation. Residues 381 to 402 constitute an intramembrane region (pore-forming); sequence FAMLTVFQCITMEGWTDVLYWM. The short motif at 391–394 is the Selectivity filter of repeat I element; sequence TMEG. Ca(2+) is bound at residue Glu393. Topologically, residues 403–410 are extracellular; sequence QDAMGYEL. Residues 411 to 431 traverse the membrane as a helical segment; sequence PWVYFVSLVIFGSFFVLNLVL. Residues 432–554 lie on the Cytoplasmic side of the membrane; it reads GVLSGEFSKE…RKCRAAVKSN (123 aa). The tract at residues 458–475 is AID/alpha-interaction domain; mediates interaction with the beta subunit; the sequence is QQLEEDLKGYLDWITQAE. The disordered stretch occupies residues 479–511; that stretch reads PENEDEGMDEDKPRNMSMPTSETESVNTENVAG. Residues 495 to 508 are compositionally biased toward polar residues; it reads SMPTSETESVNTEN. Residue Ser499 is modified to Phosphoserine. At Thr506 the chain carries Phosphothreonine. The II repeat unit spans residues 540-786; sequence NRFCRRKCRA…LFLAIAVDNL (247 aa). Residues 555 to 573 form a helical membrane-spanning segment; that stretch reads VFYWLVIFLVFLNTLTIAS. Residues 574–584 lie on the Extracellular side of the membrane; sequence EHYNQPHWLTE. A helical membrane pass occupies residues 585 to 605; sequence VQDTANKALLALFTAEMLLKM. Residues 606-616 are Cytoplasmic-facing; that stretch reads YSLGLQAYFVS. The chain crosses the membrane as a helical span at residues 617–636; that stretch reads LFNRFDCFIVCGGILETILV. Topologically, residues 637 to 645 are extracellular; it reads ETKIMSPLG. The chain crosses the membrane as a helical span at residues 646 to 664; the sequence is ISCWRCVRLLRIFKITRYW. Residues 665 to 683 lie on the Cytoplasmic side of the membrane; it reads NSLSNLVASLLNSLRSIAS. Residues 684-703 traverse the membrane as a helical segment; the sequence is LLLLLFLFIIIFSLLGMQLF. Residues 704–723 lie on the Extracellular side of the membrane; that stretch reads GGKFNFDEMQTRRSTFDNFP. Residues 724-745 constitute an intramembrane region (pore-forming); sequence QSLLTVFQILTGEDWNSVMYDG. Positions 734-737 match the Selectivity filter of repeat II motif; the sequence is TGED. Glu736 contacts Ca(2+). Residues 746 to 755 are Extracellular-facing; it reads IMAYGGPSFP. Residues 756–775 form a helical membrane-spanning segment; sequence GMLVCIYFIILFISPNYILL. At 776–930 the chain is on the cytoplasmic side; sequence NLFLAIAVDN…LQCHRIVNDT (155 aa). Residues 794–891 form a disordered region; it reads SAQKEEEEEK…EMPVGPRPRP (98 aa). Basic and acidic residues predominate over residues 813 to 836; the sequence is SPEKKQEVMEKPAVEESKEEKIEL. Ser838 and Ser845 each carry phosphoserine. An interaction with STAC2 region spans residues 859–906; it reads SENEDKSPHSNPDTAGEEDEEEPEMPVGPRPRPLSELHLKEKAVPMPE. A compositionally biased stretch (acidic residues) spans 873-882; it reads AGEEDEEEPE. Residues 917 to 1198 form an III repeat; that stretch reads NRFRLQCHRI…IFVGFVIVTF (282 aa). Residues 931–949 traverse the membrane as a helical segment; sequence IFTNLILFFILLSSISLAA. The Extracellular segment spans residues 950 to 961; the sequence is EDPVQHTSFRNH. Residues 962 to 981 form a helical membrane-spanning segment; it reads ILFYFDIVFTTIFTIEIALK. Residues 982–997 lie on the Cytoplasmic side of the membrane; it reads MTAYGAFLHKGSFCRN. Residues 998–1016 form a helical membrane-spanning segment; sequence YFNILDLLVVSVSLISFGI. Over 1017-1023 the chain is Extracellular; that stretch reads QSSAINV. Residues 1024–1041 form a helical membrane-spanning segment; sequence VKILRVLRVLRPLRINRA. Over 1042–1060 the chain is Cytoplasmic; that stretch reads KGLKHVVQCVFVAIRTIGN. Residues 1061–1080 traverse the membrane as a helical segment; it reads IVIVTTLLQFMFACIGVQLF. Residues 1081–1130 lie on the Extracellular side of the membrane; the sequence is KGKLYTCSDSSKQTEAESKGNYITYKTGEVDHPIIQPRSWENSKFDFDNV. Residues 1118–1207 are dihydropyridine binding; sequence RSWENSKFDF…FQEQGEQEYK (90 aa). The segment at residues 1131–1151 is an intramembrane region (pore-forming); the sequence is LAAMMALFTVSTFEGWPELLY. A Selectivity filter of repeat III motif is present at residues 1142–1145; sequence TFEG. Glu1144 contacts Ca(2+). Topologically, residues 1152–1168 are extracellular; it reads RSIDSHTEDKGPIYNYR. Residues 1169 to 1190 traverse the membrane as a helical segment; it reads VEISIFFIIYIIIIAFFMMNIF. At 1191 to 1248 the chain is on the cytoplasmic side; sequence VGFVIVTFQEQGEQEYKNCELDKNQRQCVEYALKARPLPRYIPKNQHQYKVWYVVNST. The IV repeat unit spans residues 1235 to 1508; it reads NQHQYKVWYV…LFVAVIMDNF (274 aa). A helical membrane pass occupies residues 1249 to 1270; the sequence is YFEYLMFVLILLNTICLAMQHY. Residues 1271-1278 lie on the Extracellular side of the membrane; it reads GQSCLFKI. The helical transmembrane segment at 1279–1300 threads the bilayer; it reads AMNILNMLFTGLFTVEMILKLI. Topologically, residues 1301–1310 are cytoplasmic; the sequence is AFKPKHYFCD. Residues 1311–1330 form a helical membrane-spanning segment; the sequence is AWNTFDALIVVGSIVDIAIT. At 1331-1353 the chain is on the extracellular side; that stretch reads EVHPAEHTQCSPSMSAEENSRIS. A helical transmembrane segment spans residues 1354-1372; that stretch reads ITFFRLFRVMRLVKLLSRG. At 1373-1390 the chain is on the cytoplasmic side; the sequence is EGIRTLLWTFIKSFQALP. The helical transmembrane segment at 1391–1411 threads the bilayer; sequence YVALLIVMLFFIYAVIGMQVF. Residues 1412–1433 lie on the Extracellular side of the membrane; it reads GKIALNDTTEINRNNNFQTFPQ. Asn1417 carries N-linked (GlcNAc...) asparagine glycosylation. The segment at residues 1434–1452 is an intramembrane region (pore-forming); that stretch reads AVLLLFRCATGEAWQDIML. Residues 1443-1446 carry the Selectivity filter of repeat IV motif; that stretch reads TGEA. Topologically, residues 1453 to 1480 are extracellular; sequence ACMPGKKCAPESEPSNSTEGETPCGSSF. The segment at 1459-1527 is dihydropyridine binding; that stretch reads KCAPESEPSN…LGPHHLDEFK (69 aa). A disulfide bridge connects residues Cys1460 and Cys1476. N-linked (GlcNAc...) asparagine glycosylation is present at Asn1468. The interval 1473–1515 is phenylalkylamine binding; sequence ETPCGSSFAVFYFISFYMLCAFLIINLFVAVIMDNFDYLTRDW. A helical transmembrane segment spans residues 1481 to 1505; sequence AVFYFISFYMLCAFLIINLFVAVIM. The Cytoplasmic portion of the chain corresponds to 1506–2169; it reads DNFDYLTRDW…PDSRSYVSNL (664 aa). Residues 1640 to 1667 form an important for interaction with STAC1, STAC2 and STAC3 region; that stretch reads DEVTVGKFYATFLIQEYFRKFKKRKEQG. Positions 1640-1673 are calmodulin-binding; it reads DEVTVGKFYATFLIQEYFRKFKKRKEQGLVGKPS. Residues 1646–1666 are calmodulin-binding IQ region; that stretch reads KFYATFLIQEYFRKFKKRKEQ. The tract at residues 1680-1699 is important for localization in at the junctional membrane; that stretch reads LQAGLRTLHDIGPEIRRAIS. Phosphoserine occurs at positions 1699 and 1720. Composition is skewed to polar residues over residues 1761–1770 and 1780–1792; these read KTGNNQADTE and STFT…STGS. The disordered stretch occupies residues 1761 to 1793; sequence KTGNNQADTESPSHEKLVDSTFTPSSYSSTGSN. Ser1927 is modified (phosphoserine; by PKA). The interval 1970–1998 is disordered; sequence RSHSPSTFPRPRPTPPVTPGSRGRPLQPI. Residues 1977–1987 show a composition bias toward pro residues; it reads FPRPRPTPPVT.

It belongs to the calcium channel alpha-1 subunit (TC 1.A.1.11) family. CACNA1C subfamily. As to quaternary structure, component of a calcium channel complex consisting of a pore-forming alpha subunit (CACNA1C) and ancillary beta, gamma and delta subunits. The channel complex contains alpha, beta, gamma and delta subunits in a 1:1:1:1 ratio, i.e. it contains only one of each type of subunit. CACNA1C channel activity is modulated by ancillary subunits, such as CACNB1, CACNB2, CACNB3, CACNA2D1 and CACNA2D4. Interacts with the gamma subunits CACNG4, CACNG6, CACNG7 and CACNG8. Interacts with CACNB1. Interacts with CACNB2. Identified in a complex with CACNA2D4 and CACNB3. Interacts with CACNB3. Interacts with CACNA2D1. Interacts with CACNA2D4. Interacts with CALM1. Interacts (via the N-terminus and the C-terminal C and IQ motifs) with CABP1; this inhibits Ca(2+)-dependent channel inactivation. The binding via the C motif is calcium independent whereas the binding via IQ requires the presence of calcium and is mutually exclusive with calmodulin binding. The binding to the cytoplasmic N-terminal domain is calcium independent but is essential for the channel modulation. Interacts (via C-terminal CDB motif) with CABP5; in a calcium-dependent manner. Interacts with CIB1; the interaction increases upon cardiomyocytes hypertrophy. Interacts with STAC2 and STAC3; this inhibits channel inactivation. Phosphorylation by PKA at Ser-1927 activates the channel. Elevated levels of blood glucose lead to increased phosphorylation by PKA. Is also phosphorylated in vitro by CaM-kinase II, PKC and CGPK. In terms of tissue distribution, detected in hippocampus and brain cortex, on neuronal cell bodies and dendrites, and in post-synaptic density in brain (at protein level). Isoforms 4 and 5 are expressed throughout the central nervous system, with highest levels in the olfactory bulb and cerebellum. Also expressed in heart, pituitary, adrenal gland, liver, kidney, and in a much lesser extent in testes and spleen.

It localises to the cell membrane. Its subcellular location is the sarcolemma. It is found in the perikaryon. The protein localises to the postsynaptic density membrane. The protein resides in the cell projection. It localises to the dendrite. Its subcellular location is the T-tubule. It carries out the reaction Ca(2+)(in) = Ca(2+)(out). Its activity is regulated as follows. Inhibited by dihydropyridines (DHP), such as isradipine. Inhibited by nifedipine. Channel activity is regulated by Ca(2+) and calmodulin. Binding of STAC1, STAC2 or STAC3 to a region that overlaps with the calmodulin binding site inhibits channel inactivation by Ca(2+) and calmodulin. Binding of calmodulin or CABP1 at the same regulatory sites results in opposite effects on the channel function. Shear stress and pressure increases calcium channel activity. In terms of biological role, pore-forming, alpha-1C subunit of the voltage-gated calcium channel that gives rise to L-type calcium currents. Mediates influx of calcium ions into the cytoplasm, and thereby triggers calcium release from the sarcoplasm. Plays an important role in excitation-contraction coupling in the heart. Required for normal heart development and normal regulation of heart rhythm. Required for normal contraction of smooth muscle cells in blood vessels and in the intestine. Essential for normal blood pressure regulation via its role in the contraction of arterial smooth muscle cells. Long-lasting (L-type) calcium channels belong to the 'high-voltage activated' (HVA) group. The chain is Voltage-dependent L-type calcium channel subunit alpha-1C (Cacna1c) from Rattus norvegicus (Rat).